Consider the following 297-residue polypeptide: Calponin-1 (297 aa).

The Calponin-homology (CH) domain occupies 28–131; sequence HQREQELREW…STLLALASMA (104 aa). Calponin-like repeat units lie at residues 164 to 189, 204 to 229, and 243 to 268; these read IGLQ…RHLY, ISLQ…RQIF, and VSLQ…RQVY. The residue at position 170 (threonine 170) is a Phosphothreonine; by ROCK2. A Phosphoserine; by ROCK2 modification is found at serine 175. Phosphothreonine; by ROCK2 is present on residues threonine 180 and threonine 184. Phosphothreonine; by ROCK2 is present on threonine 259.

Belongs to the calponin family.

Its function is as follows. Thin filament-associated protein that is implicated in the regulation and modulation of smooth muscle contraction. It is capable of binding to actin, calmodulin and tropomyosin. The interaction of calponin with actin inhibits the actomyosin Mg-ATPase activity. The polypeptide is Calponin-1 (CNN1) (Bos taurus (Bovine)).